We begin with the raw amino-acid sequence, 122 residues long: Large ribosomal subunit protein uL14c (122 aa).

Belongs to the universal ribosomal protein uL14 family. Part of the 50S ribosomal subunit.

It is found in the plastid. The protein resides in the chloroplast. Binds to 23S rRNA. This Gnetum parvifolium (Small-leaved jointfir) protein is Large ribosomal subunit protein uL14c.